The sequence spans 336 residues: Holliday junction branch migration complex subunit RuvB (336 aa).

Residues 4 to 184 (ADRIISAIAK…FGIVQRLEFY (181 aa)) are large ATPase domain (RuvB-L). Residues I23, R24, G65, K68, T69, T70, 131-133 (EDY), R174, Y184, and R221 each bind ATP. T69 is a binding site for Mg(2+). The small ATPAse domain (RuvB-S) stretch occupies residues 185 to 255 (SIEDLTSIVM…IAKAALAMLD (71 aa)). The tract at residues 258 to 336 (QAGFDYLDRK…HFGLAKLADK (79 aa)) is head domain (RuvB-H). Residues R294, R313, and R318 each coordinate DNA.

It belongs to the RuvB family. Homohexamer. Forms an RuvA(8)-RuvB(12)-Holliday junction (HJ) complex. HJ DNA is sandwiched between 2 RuvA tetramers; dsDNA enters through RuvA and exits via RuvB. An RuvB hexamer assembles on each DNA strand where it exits the tetramer. Each RuvB hexamer is contacted by two RuvA subunits (via domain III) on 2 adjacent RuvB subunits; this complex drives branch migration. In the full resolvosome a probable DNA-RuvA(4)-RuvB(12)-RuvC(2) complex forms which resolves the HJ.

Its subcellular location is the cytoplasm. The enzyme catalyses ATP + H2O = ADP + phosphate + H(+). The RuvA-RuvB-RuvC complex processes Holliday junction (HJ) DNA during genetic recombination and DNA repair, while the RuvA-RuvB complex plays an important role in the rescue of blocked DNA replication forks via replication fork reversal (RFR). RuvA specifically binds to HJ cruciform DNA, conferring on it an open structure. The RuvB hexamer acts as an ATP-dependent pump, pulling dsDNA into and through the RuvAB complex. RuvB forms 2 homohexamers on either side of HJ DNA bound by 1 or 2 RuvA tetramers; 4 subunits per hexamer contact DNA at a time. Coordinated motions by a converter formed by DNA-disengaged RuvB subunits stimulates ATP hydrolysis and nucleotide exchange. Immobilization of the converter enables RuvB to convert the ATP-contained energy into a lever motion, pulling 2 nucleotides of DNA out of the RuvA tetramer per ATP hydrolyzed, thus driving DNA branch migration. The RuvB motors rotate together with the DNA substrate, which together with the progressing nucleotide cycle form the mechanistic basis for DNA recombination by continuous HJ branch migration. Branch migration allows RuvC to scan DNA until it finds its consensus sequence, where it cleaves and resolves cruciform DNA. This Actinobacillus succinogenes (strain ATCC 55618 / DSM 22257 / CCUG 43843 / 130Z) protein is Holliday junction branch migration complex subunit RuvB.